Consider the following 304-residue polypeptide: Phosphonates import ATP-binding protein PhnC 1 (304 aa).

The ABC transporter domain maps to 4-240; it reads VSLQNVTKLF…VIDDLYYAGS (237 aa). 37–44 contributes to the ATP binding site; it reads GPSGAGKS. The interval 240 to 304 is disordered; the sequence is SESTPVSHGD…TETDTGEAQL (65 aa). Residues 263 to 272 are compositionally biased toward polar residues; that stretch reads TSVSSDMETT. Residues 289-304 show a composition bias toward acidic residues; the sequence is TDTETDTETDTGEAQL.

It belongs to the ABC transporter superfamily. Phosphonates importer (TC 3.A.1.9.1) family. The complex is composed of two ATP-binding proteins (PhnC), two transmembrane proteins (PhnE) and a solute-binding protein (PhnD).

The protein resides in the cell membrane. It catalyses the reaction phosphonate(out) + ATP + H2O = phosphonate(in) + ADP + phosphate + H(+). Its function is as follows. Part of the ABC transporter complex PhnCDE involved in phosphonates import. Responsible for energy coupling to the transport system. This chain is Phosphonates import ATP-binding protein PhnC 1, found in Haloquadratum walsbyi (strain DSM 16790 / HBSQ001).